The primary structure comprises 339 residues: ATP-dependent 6-phosphofructokinase (339 aa).

Residues Gly11, 72–73 (RY), and 102–105 (GDGS) each bind ATP. Asp103 lines the Mg(2+) pocket. Residues 125 to 127 (TID), Arg162, and 169 to 171 (MGR) contribute to the substrate site. Residue Asp127 is the Proton acceptor of the active site. Residues 185-187 (GAD) and 214-216 (KSH) contribute to the ADP site. Residues Glu223, Arg245, and 251–254 (HVIR) contribute to the substrate site.

This sequence belongs to the phosphofructokinase type A (PFKA) family. ATP-dependent PFK group I subfamily. Prokaryotic clade 'B1' sub-subfamily. Homotetramer. The cofactor is Mg(2+).

Its subcellular location is the cytoplasm. The catalysed reaction is beta-D-fructose 6-phosphate + ATP = beta-D-fructose 1,6-bisphosphate + ADP + H(+). The protein operates within carbohydrate degradation; glycolysis; D-glyceraldehyde 3-phosphate and glycerone phosphate from D-glucose: step 3/4. Its activity is regulated as follows. Allosterically activated by ADP and other diphosphonucleosides, and allosterically inhibited by phosphoenolpyruvate. Its function is as follows. Catalyzes the phosphorylation of D-fructose 6-phosphate to fructose 1,6-bisphosphate by ATP, the first committing step of glycolysis. In Streptococcus thermophilus (strain ATCC BAA-491 / LMD-9), this protein is ATP-dependent 6-phosphofructokinase.